A 316-amino-acid polypeptide reads, in one-letter code: Protease HtpX homolog (316 aa).

Residues 16–36 traverse the membrane as a helical segment; the sequence is LFMALGFTIGGTGGAMIALVV. Residue His130 coordinates Zn(2+). Glu131 is a catalytic residue. Residue His134 participates in Zn(2+) binding. The next 2 helical transmembrane spans lie at 145–165 and 174–194; these read MTAT…FFGA and LATI…QMAI. A Zn(2+)-binding site is contributed by Glu199. Residues 285 to 316 are disordered; the sequence is PNFAALSERRGSVSSVPRTRRRSSALDPNGRG.

Belongs to the peptidase M48B family. Zn(2+) is required as a cofactor.

It localises to the cell inner membrane. This is Protease HtpX homolog from Rhizorhabdus wittichii (strain DSM 6014 / CCUG 31198 / JCM 15750 / NBRC 105917 / EY 4224 / RW1) (Sphingomonas wittichii).